Consider the following 332-residue polypeptide: Casein kinase I isoform 2 (332 aa).

The Protein kinase domain maps to Phe-11–Phe-282. Residues Ile-17 to Ile-25 and Lys-40 contribute to the ATP site. The active-site Proton acceptor is the Asp-133. Positions Glu-306–Val-332 are disordered. The span at Gln-311–Gln-320 shows a compositional bias: low complexity. The span at Arg-322–Val-332 shows a compositional bias: basic and acidic residues.

The protein belongs to the protein kinase superfamily. Ser/Thr protein kinase family. Mg(2+) is required as a cofactor.

It carries out the reaction L-seryl-[protein] + ATP = O-phospho-L-seryl-[protein] + ADP + H(+). It catalyses the reaction L-threonyl-[protein] + ATP = O-phospho-L-threonyl-[protein] + ADP + H(+). In terms of biological role, serine/threonine protein kinase. May phosphorylate ZC3H11 during unstressed conditions, leading to proteasome-dependent degradation of ZC3H11. This Trypanosoma brucei brucei protein is Casein kinase I isoform 2.